Here is a 636-residue protein sequence, read N- to C-terminus: MSKEHGAAAEKHEFRTEVRKLLHIITHSLYTNREIFLRELVSNASDALDKLRFAQTRGEAAPAADLDLNIAITVNEETRTLTVSDTGIGMTRQELIDNLGTIASSGSERFLKELAEKGEQASNIIGRFGVGFYAVFMVADSVTVTTRSALDASGAWRWTSDGLGSFELEEALDAPERGTRIDIRLKEDAGDFLKKDHLKDVIRRHSNFIPFPVSVEGEHVNTTPALWREPRFQVTEEQYKDFYTFLTFDTQAPMDTIHLSIDAPVQFTSLAFIPNFGNELFGYDRDKYGLDLYVRRVLISKEYKALIPEYLSFLKGVVDTEDLPLNISRETLQENALIAKIRQTLVKQVLAHLAKLAESDAEKYATFWRTHGRVFRMGYNDYINRDKFIPLLRFNSSALDDEKGLCSLDDYIGRAREGQKTVWYVSAPNREAARLNPHVEIFRRKGIEVLYLYEAADEFIMESLGKWNEFEFRSAEHADADALKDFDDVEKKDAPEALDEEGRKTLSSLLSHMKTLLGDKVEDVRESARLSDSPACLASKDGGMTASMEKLMRVMNKDESVPRKVLEINPDHPLTRNLLRLYRADADDRLLAQATEQLYESALLLEGYLRDPHALVGRVNSLLEQATGWYAEVRKL.

An a; substrate-binding region spans residues 1-329 (MSKEHGAAAE…TEDLPLNISR (329 aa)). The tract at residues 330 to 550 (ETLQENALIA…DGGMTASMEK (221 aa)) is b. Positions 551 to 636 (LMRVMNKDES…TGWYAEVRKL (86 aa)) are c.

Belongs to the heat shock protein 90 family. As to quaternary structure, homodimer.

It localises to the cytoplasm. Molecular chaperone. Has ATPase activity. The sequence is that of Chaperone protein HtpG from Oleidesulfovibrio alaskensis (strain ATCC BAA-1058 / DSM 17464 / G20) (Desulfovibrio alaskensis).